A 249-amino-acid chain; its full sequence is Protein twisted gastrulation (249 aa).

Positions 1–23 (MQLLCYFVILFVGIAPWSSLAND) are cleaved as a signal peptide. N-linked (GlcNAc...) asparagine glycosylation occurs at Asn199.

This sequence belongs to the twisted gastrulation protein family. As to quaternary structure, component of a complex composed of dpp, sog and tsg. In terms of tissue distribution, first appears in stage 4 embryos, expressed in two domains: a broad mid-dorsal saddle and an anterior cap, expression between the domains is continuous across the dorsal midline. At stage 5, expression is refined into 4 graded stripes in the mid-dorsal region and a paired domain in the anterior region. During stages 7 and 8, anterior expression fades and the mid dorsal stripes are located between the anterior and posterior transverse furrow (ATF and PTF). Expressing cells become incorporated into the deepening PTF.

The protein resides in the secreted. Functionally, involved in dorsal-ventral patterning. Required for specification of a narrow strip of dorsal midline cells that will give rise to the amnioserosa, but not for specification of dorsal ectoderm cells. Inhibits BMP signaling; enhances the binding of sog to dpp, thus enhancing the antagonistic activity of sog. The protein is Protein twisted gastrulation (tsg) of Drosophila melanogaster (Fruit fly).